Reading from the N-terminus, the 57-residue chain is Protein Ric1 (57 aa).

2 consecutive transmembrane segments (helical) span residues Ile8–Cys28 and Ile34–Leu54.

This sequence belongs to the UPF0057 (PMP3) family.

The protein localises to the membrane. This chain is Protein Ric1 (RIC1), found in Phytophthora infestans (Potato late blight agent).